A 120-amino-acid chain; its full sequence is MVKLTSIAAGVAAIAATASATTTLAQSDERVNLVELGVYVSDIRAHLAQYYMFQAAHPTETYPVEVAEAVFNYGDFTTMLTGIAPDQVTRMITGVPWYSSRLKPAISSALSKDGIYTIAN.

The N-terminal stretch at 1 to 20 (MVKLTSIAAGVAAIAATASA) is a signal peptide.

The protein belongs to the SRP1/TIP1 family. Seripauperin subfamily.

In Saccharomyces cerevisiae (strain ATCC 204508 / S288c) (Baker's yeast), this protein is Seripauperin-8 (PAU8).